Here is a 255-residue protein sequence, read N- to C-terminus: (R)-S-adenosyl-L-methionine hydrolase (255 aa).

Adenosine-binding residues include Asp9, Asp70, and Asn186. 4 residues coordinate (R)-S-adenosyl-L-methionine: Asn186, Ser227, Glu232, and Val235. Residue Val235 coordinates adenosine.

It belongs to the SAM hydrolase / SAM-dependent halogenase family. Homotrimer.

The enzyme catalyses (R)-S-adenosyl-L-methionine + H2O = adenosine + L-methionine + H(+). Its function is as follows. Catalyzes the hydrolysis of S-adenosyl-L-methionine (SAM) into adenosine and L-methionine. Does not have chlorinase or fluorinase activity. In Thermus thermophilus (strain ATCC 27634 / DSM 579 / HB8), this protein is (R)-S-adenosyl-L-methionine hydrolase.